A 552-amino-acid polypeptide reads, in one-letter code: MAGUK p55 subfamily member 2 (552 aa).

2 L27 domains span residues 8-59 (SESA…EETK) and 60-118 (LEAV…YETP). Ser42 carries the phosphoserine modification. Thr117 carries the post-translational modification Phosphothreonine. Position 121 is a phosphoserine (Ser121). The PDZ domain occupies 140 to 219 (MVGIRKTAGE…SVILKILPSY (80 aa)). The region spanning 225–293 (PRQVFVKCHF…PSQLLEEKRK (69 aa)) is the SH3 domain. The Guanylate kinase-like domain maps to 350 to 537 (RKTLVLIGAQ…TFRELQTAME (188 aa)).

It belongs to the MAGUK family. In terms of assembly, can homomultimerise. Interacts with CACNG2. Interacts (via the SH3-Guanylate kinase-like sub-module) with DLG4/PSD95 and DLGAP1/GKAP. Interacts (via the PDZ domain) with CADM1 (via C-terminus). Interacts with KCNN2/SK2 (via N-terminal domain). Interacts with SRC. Phosphorylated by SRC. In terms of tissue distribution, expressed in hippocampal neurons.

Its subcellular location is the cell projection. The protein resides in the dendrite. The protein localises to the postsynaptic density. It localises to the cytoplasm. It is found in the cytoskeleton. Its subcellular location is the membrane. In terms of biological role, postsynaptic MAGUK scaffold protein that links CADM1 cell adhesion molecules to core components of the postsynaptic density. In CA1 pyramidal neurons, required for synaptic KCNN2-containing channel function and long-term potentiation expression. Seems to negatively regulate SRC function in epithelial cells. The chain is MAGUK p55 subfamily member 2 from Rattus norvegicus (Rat).